We begin with the raw amino-acid sequence, 444 residues long: 23S rRNA (uracil(1939)-C(5))-methyltransferase RlmD (444 aa).

The TRAM domain maps to 5–64 (KPKLNLTSQTARIVNLSHDGRGIARVNGKATFIQGALPGEVVEFQYTRVKKDFDEGKLLS). Positions 77, 83, 86, and 166 each coordinate [4Fe-4S] cluster. Residues Q276, F305, N310, E326, N353, and D374 each contribute to the S-adenosyl-L-methionine site. Residue C400 is the Nucleophile of the active site.

The protein belongs to the class I-like SAM-binding methyltransferase superfamily. RNA M5U methyltransferase family. RlmD subfamily.

It catalyses the reaction uridine(1939) in 23S rRNA + S-adenosyl-L-methionine = 5-methyluridine(1939) in 23S rRNA + S-adenosyl-L-homocysteine + H(+). In terms of biological role, catalyzes the formation of 5-methyl-uridine at position 1939 (m5U1939) in 23S rRNA. In Legionella pneumophila (strain Paris), this protein is 23S rRNA (uracil(1939)-C(5))-methyltransferase RlmD.